The following is a 451-amino-acid chain: Phosphoglucosamine mutase (451 aa).

The Phosphoserine intermediate role is filled by S104. Mg(2+) contacts are provided by S104, D249, D251, and D253. Residue S104 is modified to Phosphoserine.

Belongs to the phosphohexose mutase family. The cofactor is Mg(2+). In terms of processing, activated by phosphorylation.

The catalysed reaction is alpha-D-glucosamine 1-phosphate = D-glucosamine 6-phosphate. In terms of biological role, catalyzes the conversion of glucosamine-6-phosphate to glucosamine-1-phosphate. The sequence is that of Phosphoglucosamine mutase from Psychrobacter sp. (strain PRwf-1).